The chain runs to 191 residues: NAD(P)H-quinone oxidoreductase subunit L, chloroplastic (191 aa).

The transit peptide at Met-1–Asn-46 directs the protein to the chloroplast. The next 3 membrane-spanning stretches (helical) occupy residues Thr-61–Ile-81, Val-93–Met-113, and Tyr-129–Leu-149.

It belongs to the NDH complex subunit L family. Part of the chloroplast NDH complex, composed of a mixture of chloroplast and nucleus encoded subunits. Component of the NDH subcomplex A, at least composed of ndhH, ndhI, ndhJ, ndhK, ndhL, ndhM, ndhN and ndhO.

Its subcellular location is the plastid. It is found in the chloroplast thylakoid membrane. The catalysed reaction is a plastoquinone + NADH + (n+1) H(+)(in) = a plastoquinol + NAD(+) + n H(+)(out). It carries out the reaction a plastoquinone + NADPH + (n+1) H(+)(in) = a plastoquinol + NADP(+) + n H(+)(out). NDH shuttles electrons from NAD(P)H:plastoquinone, via FMN and iron-sulfur (Fe-S) centers, to quinones in the photosynthetic chain and possibly in a chloroplast respiratory chain. The immediate electron acceptor for the enzyme in this species is believed to be plastoquinone. Couples the redox reaction to proton translocation, and thus conserves the redox energy in a proton gradient. The polypeptide is NAD(P)H-quinone oxidoreductase subunit L, chloroplastic (Arabidopsis thaliana (Mouse-ear cress)).